We begin with the raw amino-acid sequence, 514 residues long: MNQTTETDSMRINLQRTYKDAINALNSLQSNFASIEATKKLGPSVNRNELSINEVHEFTKRLGYTPTDFNKLNIIHITGTKGKGSTCAFTESILKQYTISKIGLYTSPHLKSVRERIRINGQPINQEKFAKYFFEVWDKFTTTKSDPQECPTLQPCDQVKPMYFKYLTILSFHVFLQEGVDTAIYEVGVGGTYDSTNIIDKPTVTGISALGIDHTFMLGNNIASITENKTGIFKKGVPAFVSRQLEYPETHELIEKRAKQLGVSSLEFVDTEDLPNVKLGLSGEFQKQNAALAIRIANSHLKTIGITQDLPEFNNNDGKIKKLSNKFIKGLENVDWPGRCQIINNNPTGITWYIDGAHTIESINASSTWFKQEQIKLEKPKRRALLFNQQGRENYAELLEKLFNVTYGTGSEPQIKFDDVIFTTNTTWSSGQFNSELISKNTSEDAVKKLEVQNNLSEVWRKLDGGVSKRHVFADIETAVNYLKDLGDKDLQVFVCGSLHLVGGFLVVLDNERD.

Residue 82-85 (GKGS) coordinates ATP. Residues Ser-107, Glu-186, and His-214 each contribute to the Mg(2+) site. Residues Arg-339 and Asp-355 each contribute to the ATP site.

The protein belongs to the folylpolyglutamate synthase family. It depends on a monovalent cation as a cofactor.

It localises to the mitochondrion inner membrane. It is found in the mitochondrion matrix. The protein resides in the cytoplasm. It carries out the reaction (6S)-5,6,7,8-tetrahydrofolyl-(gamma-L-Glu)(n) + L-glutamate + ATP = (6S)-5,6,7,8-tetrahydrofolyl-(gamma-L-Glu)(n+1) + ADP + phosphate + H(+). It functions in the pathway cofactor biosynthesis; tetrahydrofolylpolyglutamate biosynthesis. Catalyzes conversion of folates to polyglutamate derivatives allowing concentration of folate compounds in the cell and the intracellular retention of these cofactors, which are important substrates for most of the folate-dependent enzymes that are involved in one-carbon transfer reactions involved in purine, pyrimidine and amino acid synthesis. The chain is Folylpolyglutamate synthase (MET7) from Candida albicans (Yeast).